A 197-amino-acid chain; its full sequence is Imidazoleglycerol-phosphate dehydratase (197 aa).

This sequence belongs to the imidazoleglycerol-phosphate dehydratase family.

The protein resides in the cytoplasm. The catalysed reaction is D-erythro-1-(imidazol-4-yl)glycerol 3-phosphate = 3-(imidazol-4-yl)-2-oxopropyl phosphate + H2O. Its pathway is amino-acid biosynthesis; L-histidine biosynthesis; L-histidine from 5-phospho-alpha-D-ribose 1-diphosphate: step 6/9. The chain is Imidazoleglycerol-phosphate dehydratase from Methylocella silvestris (strain DSM 15510 / CIP 108128 / LMG 27833 / NCIMB 13906 / BL2).